A 93-amino-acid chain; its full sequence is YcgL domain-containing protein KPK_1976 (93 aa).

Residues M1–L85 enclose the YcgL domain.

The chain is YcgL domain-containing protein KPK_1976 from Klebsiella pneumoniae (strain 342).